The chain runs to 206 residues: Protein GrpE (206 aa).

The tract at residues M1 to A64 is disordered. Over residues S46–E58 the composition is skewed to basic and acidic residues.

The protein belongs to the GrpE family. Homodimer.

The protein resides in the cytoplasm. Its function is as follows. Participates actively in the response to hyperosmotic and heat shock by preventing the aggregation of stress-denatured proteins, in association with DnaK and GrpE. It is the nucleotide exchange factor for DnaK and may function as a thermosensor. Unfolded proteins bind initially to DnaJ; upon interaction with the DnaJ-bound protein, DnaK hydrolyzes its bound ATP, resulting in the formation of a stable complex. GrpE releases ADP from DnaK; ATP binding to DnaK triggers the release of the substrate protein, thus completing the reaction cycle. Several rounds of ATP-dependent interactions between DnaJ, DnaK and GrpE are required for fully efficient folding. The chain is Protein GrpE from Prosthecochloris aestuarii (strain DSM 271 / SK 413).